A 105-amino-acid polypeptide reads, in one-letter code: MVIRVYIASSSGSVAVKKRQQAIVGFLEANRISFEEVDITMLEDQRLWMYQKIPDEKRPEKGNPLPPQIFNGEDYCGDYEDFFQSKETNTVFSFLRLPSVKDSES.

The SH3-binding signature appears at 61 to 67 (KGNPLPP).

The protein belongs to the SH3BGR family.

Its subcellular location is the nucleus. In Danio rerio (Zebrafish), this protein is SH3 domain-binding glutamic acid-rich-like protein 2 (sh3bgrl2).